Consider the following 126-residue polypeptide: UPF0102 protein TP_0913 (126 aa).

The protein belongs to the UPF0102 family.

This Treponema pallidum (strain Nichols) protein is UPF0102 protein TP_0913.